The chain runs to 672 residues: Poly-beta-1,6-N-acetyl-D-glucosamine N-deacetylase (672 aa).

The signal sequence occupies residues Met-1–Ala-20. The N-palmitoyl cysteine moiety is linked to residue Cys-21. Cys-21 is lipidated: S-diacylglycerol cysteine. The NodB homology domain occupies Lys-107 to Ser-349.

It belongs to the polysaccharide deacetylase family.

The protein resides in the cell outer membrane. Its function is as follows. Catalyzes the N-deacetylation of poly-beta-1,6-N-acetyl-D-glucosamine (PGA), a biofilm adhesin polysaccharide. N-deacetylation promotes PGA export through the PgaA porin. This chain is Poly-beta-1,6-N-acetyl-D-glucosamine N-deacetylase (pgaB), found in Escherichia coli O157:H7.